Consider the following 206-residue polypeptide: Large ribosomal subunit protein uL4 (206 aa).

Positions 42–54 (RRQQGTHQSQGRS) are enriched in polar residues. Residues 42–94 (RRQQGTHQSQGRSDVSRTGAKMFKQKGTGRARHSSARAPQFRGGGKAHGPVFR) form a disordered region. Over residues 64–76 (FKQKGTGRARHSS) the composition is skewed to basic residues.

This sequence belongs to the universal ribosomal protein uL4 family. As to quaternary structure, part of the 50S ribosomal subunit.

One of the primary rRNA binding proteins, this protein initially binds near the 5'-end of the 23S rRNA. It is important during the early stages of 50S assembly. It makes multiple contacts with different domains of the 23S rRNA in the assembled 50S subunit and ribosome. Functionally, forms part of the polypeptide exit tunnel. The polypeptide is Large ribosomal subunit protein uL4 (Bartonella tribocorum (strain CIP 105476 / IBS 506)).